The primary structure comprises 639 residues: Eukaryotic translation initiation factor 2-alpha kinase 2 (639 aa).

The Protein kinase domain maps to 171-588 (FEEYSLLGRG…LEVLNCGLLL (418 aa)). Residues 177 to 185 (LGRGGFGSV) and lysine 200 each bind ATP. Low complexity predominate over residues 298 to 320 (ISTSRKSSYSSTTESSNFENLES). The interval 298–322 (ISTSRKSSYSSTTESSNFENLESPR) is disordered. The Proton acceptor role is filled by aspartate 417.

The protein belongs to the protein kinase superfamily. Ser/Thr protein kinase family. GCN2 subfamily. In terms of processing, autophosphorylated.

The catalysed reaction is L-seryl-[protein] + ATP = O-phospho-L-seryl-[protein] + ADP + H(+). It catalyses the reaction L-threonyl-[protein] + ATP = O-phospho-L-threonyl-[protein] + ADP + H(+). Mediates down-regulation of protein synthesis in response to stress conditions by the phosphorylation of the alpha subunit of eIF-2 (tif211) on 'Ser-52'. Protein synthesis is inhibited at the level of initiation. Activity is inhibited in the presence of heme. This Schizosaccharomyces pombe (strain 972 / ATCC 24843) (Fission yeast) protein is Eukaryotic translation initiation factor 2-alpha kinase 2 (hri2).